The sequence spans 100 residues: Aspartyl/glutamyl-tRNA(Asn/Gln) amidotransferase subunit C (100 aa).

The protein belongs to the GatC family. In terms of assembly, heterotrimer of A, B and C subunits.

It carries out the reaction L-glutamyl-tRNA(Gln) + L-glutamine + ATP + H2O = L-glutaminyl-tRNA(Gln) + L-glutamate + ADP + phosphate + H(+). It catalyses the reaction L-aspartyl-tRNA(Asn) + L-glutamine + ATP + H2O = L-asparaginyl-tRNA(Asn) + L-glutamate + ADP + phosphate + 2 H(+). In terms of biological role, allows the formation of correctly charged Asn-tRNA(Asn) or Gln-tRNA(Gln) through the transamidation of misacylated Asp-tRNA(Asn) or Glu-tRNA(Gln) in organisms which lack either or both of asparaginyl-tRNA or glutaminyl-tRNA synthetases. The reaction takes place in the presence of glutamine and ATP through an activated phospho-Asp-tRNA(Asn) or phospho-Glu-tRNA(Gln). This chain is Aspartyl/glutamyl-tRNA(Asn/Gln) amidotransferase subunit C, found in Streptococcus pneumoniae serotype 19F (strain G54).